Here is a 209-residue protein sequence, read N- to C-terminus: Imidazole glycerol phosphate synthase subunit HisH (209 aa).

The Glutamine amidotransferase type-1 domain occupies K3–F209. C81 functions as the Nucleophile in the catalytic mechanism. Active-site residues include H185 and E187.

Heterodimer of HisH and HisF.

The protein resides in the cytoplasm. It carries out the reaction 5-[(5-phospho-1-deoxy-D-ribulos-1-ylimino)methylamino]-1-(5-phospho-beta-D-ribosyl)imidazole-4-carboxamide + L-glutamine = D-erythro-1-(imidazol-4-yl)glycerol 3-phosphate + 5-amino-1-(5-phospho-beta-D-ribosyl)imidazole-4-carboxamide + L-glutamate + H(+). The catalysed reaction is L-glutamine + H2O = L-glutamate + NH4(+). Its pathway is amino-acid biosynthesis; L-histidine biosynthesis; L-histidine from 5-phospho-alpha-D-ribose 1-diphosphate: step 5/9. Its function is as follows. IGPS catalyzes the conversion of PRFAR and glutamine to IGP, AICAR and glutamate. The HisH subunit catalyzes the hydrolysis of glutamine to glutamate and ammonia as part of the synthesis of IGP and AICAR. The resulting ammonia molecule is channeled to the active site of HisF. The sequence is that of Imidazole glycerol phosphate synthase subunit HisH from Prochlorococcus marinus (strain NATL2A).